We begin with the raw amino-acid sequence, 579 residues long: Laccase-24 (579 aa).

An N-terminal signal peptide occupies residues 1–23; it reads MARSWSLLLLPFALALVASVAQA. Plastocyanin-like domains are found at residues 31–148 and 159–322; these read NVGN…PRGG and EEVV…YGGG. N-linked (GlcNAc...) asparagine glycans are attached at residues N34 and N78. Residues H82 and H84 each coordinate Cu cation. Residues N110 and N116 are each glycosylated (N-linked (GlcNAc...) asparagine). Cu cation-binding residues include H127 and H129. Residues N204, N209, N219, N241, N312, N337, N348, N398, N405, N444, and N462 are each glycosylated (N-linked (GlcNAc...) asparagine). The Plastocyanin-like 3 domain occupies 425 to 563; it reads DFPDTPPIVF…GMVFEVQNGP (139 aa). Cu cation-binding residues include H480, H483, and H485. N500 carries an N-linked (GlcNAc...) asparagine glycan. Residues H542, C543, H544, and H548 each contribute to the Cu cation site.

The protein belongs to the multicopper oxidase family. Cu cation serves as cofactor.

The protein resides in the secreted. It is found in the extracellular space. The protein localises to the apoplast. It carries out the reaction 4 hydroquinone + O2 = 4 benzosemiquinone + 2 H2O. Its function is as follows. Lignin degradation and detoxification of lignin-derived products. The protein is Laccase-24 (LAC24) of Oryza sativa subsp. japonica (Rice).